Reading from the N-terminus, the 69-residue chain is Putative membrane protein insertion efficiency factor (69 aa).

This sequence belongs to the UPF0161 family.

The protein localises to the cell inner membrane. Could be involved in insertion of integral membrane proteins into the membrane. This is Putative membrane protein insertion efficiency factor from Geobacter sulfurreducens (strain ATCC 51573 / DSM 12127 / PCA).